We begin with the raw amino-acid sequence, 858 residues long: Magnesium transporter ALR2 (858 aa).

Over residues 1–14 the composition is skewed to low complexity; sequence MSSLSTSFDSSSDL. Disordered regions lie at residues 1 to 81, 318 to 337, and 365 to 396; these read MSSL…NGGY, TYNH…TSGS, and NNES…EGND. The Cytoplasmic segment spans residues 1 to 741; it reads MSSLSTSFDS…NNKVTEMLGK (741 aa). Basic and acidic residues predominate over residues 46–61; that stretch reads PIRHEALALKVDETKD. The span at 67–81 shows a compositional bias: low complexity; sequence SSSNGENSGVENGGY. Basic and acidic residues-rich tracts occupy residues 367 to 379 and 386 to 395; these read ESVR…DLHP and NKIEGEKEGN. The chain crosses the membrane as a helical span at residues 742 to 762; sequence VTMLGTMLVPLNVITGLFGMN. The Extracellular portion of the chain corresponds to 763 to 771; sequence VKVPGRNGS. The chain crosses the membrane as a helical span at residues 772–792; it reads IAWWYGILGVLLLLAVISWFL. The Cytoplasmic segment spans residues 793–858; sequence ASYWIKKIDP…SLPSRYSRYN (66 aa).

It belongs to the CorA metal ion transporter (MIT) (TC 1.A.35) family.

The protein resides in the cell membrane. Plasma membrane magnesium transporter. The sequence is that of Magnesium transporter ALR2 (ALR2) from Saccharomyces cerevisiae (strain ATCC 204508 / S288c) (Baker's yeast).